A 272-amino-acid chain; its full sequence is 1,4-dihydroxy-2-naphthoyl-CoA synthase (272 aa).

Residues Arg-33, 72–76 (SGGDQ), Tyr-84, 116–120 (YAIGG), Thr-142, Ser-148, Tyr-245, and Lys-260 contribute to the substrate site. 141–143 (QTG) provides a ligand contact to hydrogencarbonate. Residues 253–264 (GRDAFKEKRDPD) show a composition bias toward basic and acidic residues. Positions 253 to 272 (GRDAFKEKRDPDFDQFPKFP) are disordered.

It belongs to the enoyl-CoA hydratase/isomerase family. MenB subfamily. The cofactor is hydrogencarbonate.

The enzyme catalyses 2-succinylbenzoyl-CoA + H(+) = 1,4-dihydroxy-2-naphthoyl-CoA + H2O. It participates in quinol/quinone metabolism; 1,4-dihydroxy-2-naphthoate biosynthesis; 1,4-dihydroxy-2-naphthoate from chorismate: step 6/7. Its pathway is quinol/quinone metabolism; menaquinone biosynthesis. Converts o-succinylbenzoyl-CoA (OSB-CoA) to 1,4-dihydroxy-2-naphthoyl-CoA (DHNA-CoA). The sequence is that of 1,4-dihydroxy-2-naphthoyl-CoA synthase from Staphylococcus saprophyticus subsp. saprophyticus (strain ATCC 15305 / DSM 20229 / NCIMB 8711 / NCTC 7292 / S-41).